The primary structure comprises 107 residues: Holo-[acyl-carrier-protein] synthase (107 aa).

Mg(2+) contacts are provided by aspartate 10 and glutamate 54.

Belongs to the P-Pant transferase superfamily. AcpS family. The cofactor is Mg(2+).

The protein resides in the cytoplasm. The enzyme catalyses apo-[ACP] + CoA = holo-[ACP] + adenosine 3',5'-bisphosphate + H(+). Its function is as follows. Transfers the 4'-phosphopantetheine moiety from coenzyme A to a Ser of acyl-carrier-protein. The protein is Holo-[acyl-carrier-protein] synthase of Mycoplasma mobile (strain ATCC 43663 / 163K / NCTC 11711) (Mesomycoplasma mobile).